The primary structure comprises 489 residues: Rhamnulokinase (489 aa).

ATP is bound at residue 13-17 (ASSGR). A disulfide bond links Cys68 and Cys222. Substrate is bound by residues Gly83 and 236 to 238 (HDT). Asp237 (proton acceptor) is an active-site residue. Thr259 contacts ATP. Asn296 serves as a coordination point for substrate. Residue Gln304 participates in ATP binding. Cysteines 353 and 370 form a disulfide. Gly402 contributes to the ATP binding site. A disulfide bridge connects residues Cys413 and Cys417.

The protein belongs to the rhamnulokinase family. In terms of assembly, monomer. Mg(2+) serves as cofactor.

It carries out the reaction L-rhamnulose + ATP = L-rhamnulose 1-phosphate + ADP + H(+). Its pathway is carbohydrate degradation; L-rhamnose degradation; glycerone phosphate from L-rhamnose: step 2/3. Functionally, involved in the catabolism of L-rhamnose (6-deoxy-L-mannose). Catalyzes the transfer of the gamma-phosphate group from ATP to the 1-hydroxyl group of L-rhamnulose to yield L-rhamnulose 1-phosphate. The chain is Rhamnulokinase from Escherichia coli O9:H4 (strain HS).